Consider the following 1989-residue polypeptide: Exophilin-5 (1989 aa).

Positions 7-63 (AFDFSFLNDEEARKILQVLERNEELQRAEKDRISKLQKTKRDIRWLQGVTGEWFEEI) constitute a RabBD domain. 2 disordered regions span residues 93-117 (NDPI…PFSS) and 348-391 (TQSK…FLRA). Polar residues-rich tracts occupy residues 100–111 (TSRSKNVTNQKK) and 359–376 (HQQS…WNRS). A compositionally biased stretch (basic and acidic residues) spans 377-389 (DSSRDRENQEEFL). Residue Ser-603 is modified to Phosphoserine. Disordered stretches follow at residues 631–651 (FSQI…NPTV), 806–827 (STAS…RTDQ), and 882–933 (AALP…NQKN). The span at 641–651 (PQSPNLQNPTV) shows a compositional bias: polar residues. A phosphoserine mark is found at Ser-806 and Ser-809. The segment covering 891–909 (KNSSLDAPVVPSTTVFSRR) has biased composition (polar residues). Residues 910-927 (SPSDKDPSLGEREEKDNA) are compositionally biased toward basic and acidic residues. Residues Ser-1028 and Ser-1086 each carry the phosphoserine modification. 3 disordered regions span residues 1094-1113 (EATE…VRKG), 1124-1152 (SCPS…ASEL), and 1365-1493 (EIFS…TNCQ). The span at 1098 to 1110 (RMTNVKSSGSTSV) shows a compositional bias: polar residues. Ser-1124 carries the post-translational modification Phosphoserine. The span at 1379-1390 (SENKKERGKKLQ) shows a compositional bias: basic and acidic residues. Low complexity predominate over residues 1416-1431 (SINSSNSGPSSLPALS). Over residues 1434–1447 (NIGNSQTRRSSWEC) the composition is skewed to polar residues. A Phosphoserine modification is found at Ser-1505. 2 disordered regions span residues 1521 to 1590 (EETQ…NRSS) and 1644 to 1737 (PEPT…PITF). 3 stretches are compositionally biased toward basic and acidic residues: residues 1551-1560 (ESRKAEDEMQ), 1573-1589 (NKNK…ENRS), and 1658-1670 (RLSE…KKSE). Polar residues predominate over residues 1685 to 1709 (THVSNQKSNSISQRHQNEFKNVSES). Phosphoserine occurs at positions 1753, 1768, 1821, and 1851. The tract at residues 1921 to 1989 (FLKDDLRNPP…LDENDKESEL (69 aa)) is disordered. Over residues 1933–1943 (SESLSSNSPSS) the composition is skewed to low complexity. Acidic residues predominate over residues 1959–1989 (YEDDPVDSDCDTDTTTDDEYYLDENDKESEL).

Interacts with RAB27A. In terms of tissue distribution, expressed in keratinocytes.

May act as Rab effector protein and play a role in vesicle trafficking. This is Exophilin-5 from Homo sapiens (Human).